The primary structure comprises 491 residues: PE-PGRS family protein PE_PGRS26 (491 aa).

Residues M1 to A93 enclose the PE domain. Composition is skewed to gly residues over residues N207 to L221 and G229 to G238. Disordered stretches follow at residues N207–G238, D255–G275, and A444–G491. Residues A444–G485 are compositionally biased toward gly residues.

The protein belongs to the mycobacterial PE family. PGRS subfamily.

The protein localises to the cell surface. This Mycobacterium tuberculosis (strain ATCC 25618 / H37Rv) protein is PE-PGRS family protein PE_PGRS26.